The primary structure comprises 1728 residues: Nebulin-related-anchoring protein (1728 aa).

Positions 4–64 constitute an LIM zinc-binding domain; it reads QACSRCGYGV…HAHNPKNNTF (61 aa). Nebulin repeat units lie at residues 173–200, 201–235, 244–271, 313–340, 345–379, 386–414, 416–450, 484–518, 519–553, 555–589, 599–623, 624–658, 659–689, 699–721, 723–757, 758–792, 794–828, 841–866, 867–893, 898–932, 943–960, 966–1000, 1001–1035, 1037–1071, 1075–1109, 1110–1136, 1141–1175, 1180–1203, 1209–1243, 1244–1278, 1280–1314, 1318–1352, 1353–1379, 1384–1418, 1425–1446, 1452–1478, 1487–1521, 1523–1557, 1561–1595, 1596–1630, and 1637–1661; these read TPAY…ERVS, TFTP…QQRG, TPAY…REMK, TPAY…KMKG, HSLA…NSKG, ETPQ…TQLR, HYDG…HDVV, KFSS…RNKL, NYTL…KTKG, GFEM…KMKG, LLHS…ESKT, HFNL…DYTV, LPED…WMRG, NLEQ…RVDE, KFTS…QSVH, QYTI…KQKA, GFEL…RSRG, QMSH…DTRS, QCHI…VGYR, CFTA…WMKG, VEQA…KYRQ, KFTS…NVKH, HYTQ…RLRD, GYKL…RMKG, GSRS…HAKA, HFHL…QDYR, QHTV…FMRG, VPGT…KYRQ, KYTA…DARH, QYTM…NLRA, GYKL…KERG, GVRN…SSQA, QCHL…HDYR, EFTA…GMKG, QSPQ…KYRK, KFTT…RLYR, RYTP…QSRA, GYDF…RDRG, GYRS…KGRS, QFHS…QHTS, and LKHA…LTRG. The residue at position 203 (T203) is a Phosphothreonine. At S1078 the chain carries Phosphoserine.

In terms of assembly, interacts with actin, alpha-actinin, KLHL41, TLN1 and VCL. Interacts with CSRP3. In terms of tissue distribution, expressed in cardiac and skeletal muscle. Not detected in kidney, spleen, liver, brain, lung, stomach or uterus.

May be involved in anchoring the terminal actin filaments in the myofibril to the membrane and in transmitting tension from the myofibrils to the extracellular matrix. The protein is Nebulin-related-anchoring protein of Mus musculus (Mouse).